Consider the following 169-residue polypeptide: Disulfide bond formation protein B (169 aa).

Residues 1–13 (MQALNHFSRIRLS) are Cytoplasmic-facing. Residues 14 to 30 (WFLLLLCIIFFEASALT) traverse the membrane as a helical segment. Over 31-48 (FQHIMKLPPCVMCIYERV) the chain is Periplasmic. A disulfide bridge connects residues cysteine 40 and cysteine 43. A helical membrane pass occupies residues 49-64 (AMMGIGGAAIIGLLNP). Over 65–71 (NNLIIRW) the chain is Cytoplasmic. The helical transmembrane segment at 72–89 (CGFIAWGISAGWGLKLAL) threads the bilayer. The Periplasmic portion of the chain corresponds to 90-144 (EHVDFQLNPSPFSTCDLFVTFPSWAPLNKWAPWMFEAYGDCSKIVWQFLTLTMPQ). A disulfide bridge connects residues cysteine 104 and cysteine 130. The helical transmembrane segment at 145–163 (WLVIIFAGNLIALAIFVIA) threads the bilayer. Topologically, residues 164 to 169 (QFFNKK) are cytoplasmic.

This sequence belongs to the DsbB family.

It localises to the cell inner membrane. Required for disulfide bond formation in some periplasmic proteins. Acts by oxidizing the DsbA protein. This Aliivibrio fischeri (strain ATCC 700601 / ES114) (Vibrio fischeri) protein is Disulfide bond formation protein B.